We begin with the raw amino-acid sequence, 339 residues long: Dihydroorotate dehydrogenase (quinone) (339 aa).

FMN contacts are provided by residues 62 to 66 (AGLDK) and T86. K66 is a substrate binding site. 111 to 115 (NRMGF) lines the substrate pocket. 2 residues coordinate FMN: N139 and N172. Residue N172 participates in substrate binding. S175 acts as the Nucleophile in catalysis. N177 lines the substrate pocket. Residues K217 and T245 each contribute to the FMN site. Position 246–247 (246–247 (NT)) interacts with substrate. Residues G268, G297, and 318–319 (YS) contribute to the FMN site.

This sequence belongs to the dihydroorotate dehydrogenase family. Type 2 subfamily. In terms of assembly, monomer. Requires FMN as cofactor.

The protein resides in the cell membrane. It catalyses the reaction (S)-dihydroorotate + a quinone = orotate + a quinol. The protein operates within pyrimidine metabolism; UMP biosynthesis via de novo pathway; orotate from (S)-dihydroorotate (quinone route): step 1/1. Catalyzes the conversion of dihydroorotate to orotate with quinone as electron acceptor. The polypeptide is Dihydroorotate dehydrogenase (quinone) (Shewanella denitrificans (strain OS217 / ATCC BAA-1090 / DSM 15013)).